A 679-amino-acid chain; its full sequence is Glycine--tRNA ligase beta subunit (679 aa).

It belongs to the class-II aminoacyl-tRNA synthetase family. Tetramer of two alpha and two beta subunits.

It localises to the cytoplasm. It carries out the reaction tRNA(Gly) + glycine + ATP = glycyl-tRNA(Gly) + AMP + diphosphate. In Bacillus subtilis (strain 168), this protein is Glycine--tRNA ligase beta subunit (glyS).